The following is a 911-amino-acid chain: Bifunctional aspartokinase/homoserine dehydrogenase 1, chloroplastic (911 aa).

The transit peptide at 1–82 (MPVVSLAKVV…VENGHLPKGD (82 aa)) directs the protein to the chloroplast. The aspartokinase stretch occupies residues 83 to 331 (SWAVHKFGGT…VSEAVVLKTL (249 aa)). An interface region spans residues 332 to 557 (SYQEAWEMSY…LSRTTLAVGI (226 aa)). ACT domains follow at residues 407-482 (VEGT…IIPN) and 488-565 (AVGQ…LIGG). The tract at residues 558 to 911 (IGPGLIGGTL…RLAFYLGAPS (354 aa)) is homoserine dehydrogenase. Residues Ile563 and Thr644 each coordinate NAD(+). Ile563, Thr644, and Lys668 together coordinate NADP(+). Residues Ile563, Thr644, and Lys668 each contribute to the NADPH site. Glu695, Val698, Ala700, and Leu702 together coordinate Na(+). NADP(+) contacts are provided by Gly753 and Glu756. Residues Glu756 and Asp767 each contribute to the L-homoserine site. Lys771 functions as the Proton donor in the catalytic mechanism. Position 888 (Gly888) interacts with NAD(+). NADP(+) is bound at residue Gly888. Residue Gly888 participates in NADPH binding.

In the N-terminal section; belongs to the aspartokinase family. It in the C-terminal section; belongs to the homoserine dehydrogenase family. As to quaternary structure, homo- or heterodimer. A metal cation serves as cofactor.

The protein localises to the plastid. It is found in the chloroplast. The enzyme catalyses L-homoserine + NADP(+) = L-aspartate 4-semialdehyde + NADPH + H(+). It carries out the reaction L-homoserine + NAD(+) = L-aspartate 4-semialdehyde + NADH + H(+). The catalysed reaction is L-aspartate + ATP = 4-phospho-L-aspartate + ADP. The protein operates within amino-acid biosynthesis; L-lysine biosynthesis via DAP pathway; (S)-tetrahydrodipicolinate from L-aspartate: step 1/4. It participates in amino-acid biosynthesis; L-methionine biosynthesis via de novo pathway; L-homoserine from L-aspartate: step 1/3. It functions in the pathway amino-acid biosynthesis; L-methionine biosynthesis via de novo pathway; L-homoserine from L-aspartate: step 3/3. Its pathway is amino-acid biosynthesis; L-threonine biosynthesis; L-threonine from L-aspartate: step 1/5. The protein operates within amino-acid biosynthesis; L-threonine biosynthesis; L-threonine from L-aspartate: step 3/5. Its activity is regulated as follows. Inhibition of aspartate kinase activity by threonine and leucine and 3-fold activation by cysteine, isoleucine, valine, serine and alanine at 2.5 mM. Partial inhibition of homoserine dehydrogenase activity by threonine and cysteine (14% of activity remaining at saturation with either amino acid). No synergy between the effectors for both activation or inhibition. Its function is as follows. Bifunctional aspartate kinase and homoserine dehydrogenase that catalyzes the first and the third steps toward the synthesis of lysine, methionine and threonine from aspartate. The protein is Bifunctional aspartokinase/homoserine dehydrogenase 1, chloroplastic of Arabidopsis thaliana (Mouse-ear cress).